The following is a 365-amino-acid chain: Cytochrome P450 71A3 (365 aa).

The protein belongs to the cytochrome P450 family. Heme serves as cofactor.

In terms of biological role, may have a role in maturation, such as during flavor formation or other metabolite production specific to aging tissues. The polypeptide is Cytochrome P450 71A3 (CYP71A3) (Solanum melongena (Eggplant)).